We begin with the raw amino-acid sequence, 157 residues long: Endoribonuclease YbeY (157 aa).

Zn(2+)-binding residues include His-112, His-116, and His-122.

This sequence belongs to the endoribonuclease YbeY family. Requires Zn(2+) as cofactor.

The protein resides in the cytoplasm. Functionally, single strand-specific metallo-endoribonuclease involved in late-stage 70S ribosome quality control and in maturation of the 3' terminus of the 16S rRNA. This chain is Endoribonuclease YbeY, found in Marinobacter nauticus (strain ATCC 700491 / DSM 11845 / VT8) (Marinobacter aquaeolei).